The chain runs to 490 residues: Malonyl-[acyl-carrier protein] O-methyltransferase (490 aa).

Residues 1–248 (MKLKRLYPPQ…AASSKLLIAQ (248 aa)) form a unknown region. The tract at residues 249–490 (RFTKAIGTYP…HPIYIIAKKR (242 aa)) is malonyl-CoA O-methyltransferase.

The protein belongs to the methyltransferase superfamily.

The enzyme catalyses malonyl-[ACP] + S-adenosyl-L-methionine = malonyl-[ACP] methyl ester + S-adenosyl-L-homocysteine. Its pathway is cofactor biosynthesis; biotin biosynthesis. In terms of biological role, converts the free carboxyl group of a malonyl-thioester to its methyl ester by transfer of a methyl group from S-adenosyl-L-methionine (SAM). It allows to synthesize pimeloyl-ACP via the fatty acid synthetic pathway. The protein is Malonyl-[acyl-carrier protein] O-methyltransferase (bioC) of Bacteroides fragilis (strain 638R).